Consider the following 283-residue polypeptide: Energy-coupling factor transporter ATP-binding protein EcfA1 (283 aa).

Positions Val7 to Asp244 constitute an ABC transporter domain. Gly41–Ser48 provides a ligand contact to ATP.

It belongs to the ABC transporter superfamily. Energy-coupling factor EcfA family. Forms a stable energy-coupling factor (ECF) transporter complex composed of 2 membrane-embedded substrate-binding proteins (S component), 2 ATP-binding proteins (A component) and 2 transmembrane proteins (T component).

It localises to the cell membrane. Functionally, ATP-binding (A) component of a common energy-coupling factor (ECF) ABC-transporter complex. Unlike classic ABC transporters this ECF transporter provides the energy necessary to transport a number of different substrates. The polypeptide is Energy-coupling factor transporter ATP-binding protein EcfA1 (Lactobacillus acidophilus (strain ATCC 700396 / NCK56 / N2 / NCFM)).